We begin with the raw amino-acid sequence, 327 residues long: MGQVATEEKRPTSVAELPGVGPSTAAKLIDAGYGTIEALAVATPEELVAIGIPLTTAQKIIRAARQMLDIRFRTAKEVKLERMNLRKITTGSKNLDDLLGGGIETKTITEFFGEFGSGKSQLCHQASVNVQLPLEQGGLSEGDKVAKAVYVDTEGTFRWERIEQMAKCLGLDPDQVMDNIYYIRAVNSDHQMAIVEELFNLVPKENVKLIVVDSVTSHFRAEYPGRENLAVRQQKLNKHLHQLGKLAEVYNTAVIITNQVMARPDVFYGDPTQAVGGHVLYHAPGVRVQLKKARGNKRIARVVDAPHLPEAEAVFAITDCGIRDPED.

Position 113-120 (113-120) interacts with ATP; the sequence is GEFGSGKS.

The protein belongs to the eukaryotic RecA-like protein family.

Functionally, involved in DNA repair and in homologous recombination. Binds and assemble on single-stranded DNA to form a nucleoprotein filament. Hydrolyzes ATP in a ssDNA-dependent manner and promotes DNA strand exchange between homologous DNA molecules. The chain is DNA repair and recombination protein RadA from Ignicoccus hospitalis (strain KIN4/I / DSM 18386 / JCM 14125).